Here is a 159-residue protein sequence, read N- to C-terminus: Eukaryotic translation initiation factor 5A (159 aa).

At Lys-51 the chain carries Hypusine.

It belongs to the eIF-5A family. Lys-51 undergoes hypusination, a unique post-translational modification that consists in the addition of a butylamino group from spermidine to lysine side chain, leading to the formation of the unusual amino acid hypusine. eIF-5As are the only known proteins to undergo this modification, which is essential for their function.

It localises to the cytoplasm. Its function is as follows. Translation factor that promotes translation elongation and termination, particularly upon ribosome stalling at specific amino acid sequence contexts. Binds between the exit (E) and peptidyl (P) site of the ribosome and promotes rescue of stalled ribosome: specifically required for efficient translation of polyproline-containing peptides as well as other motifs that stall the ribosome. Acts as a ribosome quality control (RQC) cofactor by joining the RQC complex to facilitate peptidyl transfer during CAT tailing step. Functions as a regulator of autophagy. The sequence is that of Eukaryotic translation initiation factor 5A from Drosophila melanogaster (Fruit fly).